Reading from the N-terminus, the 465-residue chain is Azaphilone cluster-specific transcription factor azaR (465 aa).

The span at 1–16 (MSDSRTTTTKNNTTNH) shows a compositional bias: low complexity. Positions 1-25 (MSDSRTTTTKNNTTNHKTSRQGPGS) are disordered. Residues 27–53 (CEECRRRKLRCDRQPQCQNCVDAGVYC) constitute a DNA-binding region (zn(2)-C6 fungal-type).

The protein localises to the nucleus. In terms of biological role, transcription factor that regulates the expression of the gene cluster that mediates the biosynthesis of azaphilones, a class of fungal metabolites characterized by a highly oxygenated pyrano-quinone bicyclic core and exhibiting a broad range of bioactivities. This chain is Azaphilone cluster-specific transcription factor azaR, found in Aspergillus niger (strain ATCC 1015 / CBS 113.46 / FGSC A1144 / LSHB Ac4 / NCTC 3858a / NRRL 328 / USDA 3528.7).